A 185-amino-acid polypeptide reads, in one-letter code: Ribosome-recycling factor (185 aa).

This sequence belongs to the RRF family.

It is found in the cytoplasm. Responsible for the release of ribosomes from messenger RNA at the termination of protein biosynthesis. May increase the efficiency of translation by recycling ribosomes from one round of translation to another. This chain is Ribosome-recycling factor, found in Pseudomonas putida (strain W619).